The sequence spans 361 residues: Ribosomal RNA small subunit methyltransferase H (361 aa).

S-adenosyl-L-methionine is bound by residues 54-56 (GGH), Asp74, Tyr101, Asp122, and Gln129. Residues 318 to 361 (ARNSRASSAKLRAAQRLAEGQAPRPRRRNKYAPEGRDEPEGGAA) are disordered. Over residues 348–361 (YAPEGRDEPEGGAA) the composition is skewed to basic and acidic residues.

It belongs to the methyltransferase superfamily. RsmH family.

The protein localises to the cytoplasm. The catalysed reaction is cytidine(1402) in 16S rRNA + S-adenosyl-L-methionine = N(4)-methylcytidine(1402) in 16S rRNA + S-adenosyl-L-homocysteine + H(+). Functionally, specifically methylates the N4 position of cytidine in position 1402 (C1402) of 16S rRNA. The chain is Ribosomal RNA small subunit methyltransferase H from Nitratidesulfovibrio vulgaris (strain DSM 19637 / Miyazaki F) (Desulfovibrio vulgaris).